Here is a 455-residue protein sequence, read N- to C-terminus: Chromosomal replication initiator protein DnaA (455 aa).

The segment at 1 to 75 (MDTNNNIEKE…EILSQNKVGM (75 aa)) is domain I, interacts with DnaA modulators. The segment at 75–106 (MHLAHSVDVRIEVAPKIQINAQANINYKAIKT) is domain II. A domain III, AAA+ region region spans residues 107 to 321 (SVKDSYTFEN…GAIIKISVNA (215 aa)). 4 residues coordinate ATP: Gly151, Gly153, Lys154, and Thr155. The segment at 322–455 (NLMNAPIDLN…DKKTAFNSSE (134 aa)) is domain IV, binds dsDNA.

The protein belongs to the DnaA family. Oligomerizes as a right-handed, spiral filament on DNA at oriC.

It localises to the cytoplasm. Functionally, plays an essential role in the initiation and regulation of chromosomal replication. ATP-DnaA binds to the origin of replication (oriC) to initiate formation of the DNA replication initiation complex once per cell cycle. Binds the DnaA box (a 9 base pair repeat at the origin) and separates the double-stranded (ds)DNA. Forms a right-handed helical filament on oriC DNA; dsDNA binds to the exterior of the filament while single-stranded (ss)DNA is stabiized in the filament's interior. The ATP-DnaA-oriC complex binds and stabilizes one strand of the AT-rich DNA unwinding element (DUE), permitting loading of DNA polymerase. After initiation quickly degrades to an ADP-DnaA complex that is not apt for DNA replication. Binds acidic phospholipids. The sequence is that of Chromosomal replication initiator protein DnaA from Helicobacter pylori (strain P12).